Reading from the N-terminus, the 447-residue chain is Trigger factor (447 aa).

The 86-residue stretch at 188-273 folds into the PPIase FKBP-type domain; sequence GDKLVIDFEG…VNDIQVAEDF (86 aa).

The protein belongs to the FKBP-type PPIase family. Tig subfamily.

It localises to the cytoplasm. It carries out the reaction [protein]-peptidylproline (omega=180) = [protein]-peptidylproline (omega=0). In terms of biological role, involved in protein export. Acts as a chaperone by maintaining the newly synthesized protein in an open conformation. Functions as a peptidyl-prolyl cis-trans isomerase. The chain is Trigger factor from Wolbachia sp. subsp. Brugia malayi (strain TRS).